We begin with the raw amino-acid sequence, 259 residues long: Cytochrome c oxidase subunit 3 (259 aa).

7 consecutive transmembrane segments (helical) span residues 13-33 (PWPLTGSLGAMFLTVGLTSWF), 36-56 (HGFITMLLGLFLVLMTMFQWW), 80-100 (GMVLFITSEICFFFAFFWAYF), 125-145 (FQIPLLNTAILLASGVTVTWA), 154-174 (HAEATQSMVLTVILGGYFTLL), 195-215 (FFVATGFHGLHVIIGSVFLLI), and 237-257 (AWYWHFVDVVWLILYTCIYWW).

This sequence belongs to the cytochrome c oxidase subunit 3 family. In terms of assembly, component of the cytochrome c oxidase (complex IV, CIV), a multisubunit enzyme composed of a catalytic core of 3 subunits and several supernumerary subunits. The complex exists as a monomer or a dimer and forms supercomplexes (SCs) in the inner mitochondrial membrane with ubiquinol-cytochrome c oxidoreductase (cytochrome b-c1 complex, complex III, CIII).

The protein resides in the mitochondrion inner membrane. It carries out the reaction 4 Fe(II)-[cytochrome c] + O2 + 8 H(+)(in) = 4 Fe(III)-[cytochrome c] + 2 H2O + 4 H(+)(out). Functionally, component of the cytochrome c oxidase, the last enzyme in the mitochondrial electron transport chain which drives oxidative phosphorylation. The respiratory chain contains 3 multisubunit complexes succinate dehydrogenase (complex II, CII), ubiquinol-cytochrome c oxidoreductase (cytochrome b-c1 complex, complex III, CIII) and cytochrome c oxidase (complex IV, CIV), that cooperate to transfer electrons derived from NADH and succinate to molecular oxygen, creating an electrochemical gradient over the inner membrane that drives transmembrane transport and the ATP synthase. Cytochrome c oxidase is the component of the respiratory chain that catalyzes the reduction of oxygen to water. Electrons originating from reduced cytochrome c in the intermembrane space (IMS) are transferred via the dinuclear copper A center (CU(A)) of subunit 2 and heme A of subunit 1 to the active site in subunit 1, a binuclear center (BNC) formed by heme A3 and copper B (CU(B)). The BNC reduces molecular oxygen to 2 water molecules using 4 electrons from cytochrome c in the IMS and 4 protons from the mitochondrial matrix. This Heterololigo bleekeri (Spear squid) protein is Cytochrome c oxidase subunit 3 (COIII).